Here is a 443-residue protein sequence, read N- to C-terminus: ATP-dependent protease ATPase subunit HslU (443 aa).

ATP contacts are provided by residues Ile-19, Gly-61–Glu-66, Asp-256, Glu-321, and Arg-393.

The protein belongs to the ClpX chaperone family. HslU subfamily. A double ring-shaped homohexamer of HslV is capped on each side by a ring-shaped HslU homohexamer. The assembly of the HslU/HslV complex is dependent on binding of ATP.

The protein resides in the cytoplasm. In terms of biological role, ATPase subunit of a proteasome-like degradation complex; this subunit has chaperone activity. The binding of ATP and its subsequent hydrolysis by HslU are essential for unfolding of protein substrates subsequently hydrolyzed by HslV. HslU recognizes the N-terminal part of its protein substrates and unfolds these before they are guided to HslV for hydrolysis. This is ATP-dependent protease ATPase subunit HslU from Ralstonia nicotianae (strain ATCC BAA-1114 / GMI1000) (Ralstonia solanacearum).